A 161-amino-acid polypeptide reads, in one-letter code: Transcriptional repressor NrdR (161 aa).

A compositionally biased stretch (polar residues) spans 1 to 11 (MRCPSCNSLDT). The segment at 1–20 (MRCPSCNSLDTQVKDSRPTE) is disordered. A zinc finger spans residues 3 to 34 (CPSCNSLDTQVKDSRPTEDSSVIRRRRVCVTC). Residues 49–139 (LTVIKRNGRR…VYRNFREAKD (91 aa)) enclose the ATP-cone domain.

The protein belongs to the NrdR family. The cofactor is Zn(2+).

Negatively regulates transcription of bacterial ribonucleotide reductase nrd genes and operons by binding to NrdR-boxes. The sequence is that of Transcriptional repressor NrdR from Bradyrhizobium sp. (strain BTAi1 / ATCC BAA-1182).